The following is a 553-amino-acid chain: Chaperonin GroEL (553 aa).

ATP-binding positions include 30–33, K51, 87–91, G416, and D496; these read TLGP and DGTTT.

The protein belongs to the chaperonin (HSP60) family. In terms of assembly, forms a cylinder of 14 subunits composed of two heptameric rings stacked back-to-back. Interacts with the co-chaperonin GroES.

Its subcellular location is the cytoplasm. The catalysed reaction is ATP + H2O + a folded polypeptide = ADP + phosphate + an unfolded polypeptide.. Its function is as follows. Together with its co-chaperonin GroES, plays an essential role in assisting protein folding. The GroEL-GroES system forms a nano-cage that allows encapsulation of the non-native substrate proteins and provides a physical environment optimized to promote and accelerate protein folding. This Alkalilimnicola ehrlichii (strain ATCC BAA-1101 / DSM 17681 / MLHE-1) protein is Chaperonin GroEL.